The following is a 459-amino-acid chain: Putrescine aminotransferase (459 aa).

Pyridoxal 5'-phosphate is bound by residues 150-151 (GT) and glutamine 274. N6-(pyridoxal phosphate)lysine is present on lysine 300. Threonine 332 serves as a coordination point for pyridoxal 5'-phosphate.

This sequence belongs to the class-III pyridoxal-phosphate-dependent aminotransferase family. Putrescine aminotransferase subfamily. It depends on pyridoxal 5'-phosphate as a cofactor.

The catalysed reaction is an alkane-alpha,omega-diamine + 2-oxoglutarate = an omega-aminoaldehyde + L-glutamate. It catalyses the reaction putrescine + 2-oxoglutarate = 1-pyrroline + L-glutamate + H2O. The enzyme catalyses cadaverine + 2-oxoglutarate = 5-aminopentanal + L-glutamate. The protein operates within amine and polyamine degradation; putrescine degradation; 4-aminobutanal from putrescine (transaminase route): step 1/1. Functionally, catalyzes the aminotransferase reaction from putrescine to 2-oxoglutarate, leading to glutamate and 4-aminobutanal, which spontaneously cyclizes to form 1-pyrroline. This is the first step in one of two pathways for putrescine degradation, where putrescine is converted into 4-aminobutanoate (gamma-aminobutyrate or GABA) via 4-aminobutanal. Also functions as a cadaverine transaminase in a a L-lysine degradation pathway to succinate that proceeds via cadaverine, glutarate and L-2-hydroxyglutarate. The polypeptide is Putrescine aminotransferase (Klebsiella pneumoniae (strain 342)).